The following is a 430-amino-acid chain: Adenylosuccinate synthetase (430 aa).

GTP contacts are provided by residues 12-18 (GDEGKGK) and 40-42 (GHT). The Proton acceptor role is filled by D13. Mg(2+) contacts are provided by D13 and G40. Residues 13–16 (DEGK), 38–41 (NAGH), T130, R144, Q224, and T239 contribute to the IMP site. Residue H41 is the Proton donor of the active site. The tract at residues 277 to 297 (PFPTEQDNETGRKIGERGREF) is disordered. Basic and acidic residues predominate over residues 285 to 296 (ETGRKIGERGRE). 299 to 305 (TNTGRPR) lines the substrate pocket. R303 provides a ligand contact to IMP. Residues R305, 331–333 (KLD), and 413–415 (STS) contribute to the GTP site.

The protein belongs to the adenylosuccinate synthetase family. As to quaternary structure, homodimer. Requires Mg(2+) as cofactor.

The protein localises to the cytoplasm. It carries out the reaction IMP + L-aspartate + GTP = N(6)-(1,2-dicarboxyethyl)-AMP + GDP + phosphate + 2 H(+). It participates in purine metabolism; AMP biosynthesis via de novo pathway; AMP from IMP: step 1/2. In terms of biological role, plays an important role in the de novo pathway of purine nucleotide biosynthesis. Catalyzes the first committed step in the biosynthesis of AMP from IMP. This is Adenylosuccinate synthetase from Bradyrhizobium sp. (strain ORS 278).